A 261-amino-acid polypeptide reads, in one-letter code: ATP synthase subunit a (261 aa).

A run of 8 helical transmembrane segments spans residues 30–50, 63–83, 96–116, 125–145, 151–171, 187–207, 214–234, and 235–255; these read VLFT…GLFM, WQVA…ANIG, LFMF…VLGL, IAIT…VGFW, FFSL…IAPI, LFVA…FVIN, LWLG…ISAL, and ELLV…LYIN.

It belongs to the ATPase A chain family. In terms of assembly, F-type ATPases have 2 components, CF(1) - the catalytic core - and CF(0) - the membrane proton channel. CF(1) has five subunits: alpha(3), beta(3), gamma(1), delta(1), epsilon(1). CF(0) has three main subunits: a(1), b(2) and c(9-12). The alpha and beta chains form an alternating ring which encloses part of the gamma chain. CF(1) is attached to CF(0) by a central stalk formed by the gamma and epsilon chains, while a peripheral stalk is formed by the delta and b chains.

The protein resides in the cell inner membrane. Key component of the proton channel; it plays a direct role in the translocation of protons across the membrane. The sequence is that of ATP synthase subunit a from Sphingopyxis alaskensis (strain DSM 13593 / LMG 18877 / RB2256) (Sphingomonas alaskensis).